The following is a 310-amino-acid chain: tRNA dimethylallyltransferase (310 aa).

Residue 10–17 (GPTAVGKS) coordinates ATP. 12-17 (TAVGKS) is a binding site for substrate. Interaction with substrate tRNA stretches follow at residues 35–38 (DSAQ), 159–163 (QRIQR), and 274–281 (KRQITWLR).

It belongs to the IPP transferase family. Monomer. Requires Mg(2+) as cofactor.

It carries out the reaction adenosine(37) in tRNA + dimethylallyl diphosphate = N(6)-dimethylallyladenosine(37) in tRNA + diphosphate. Its function is as follows. Catalyzes the transfer of a dimethylallyl group onto the adenine at position 37 in tRNAs that read codons beginning with uridine, leading to the formation of N6-(dimethylallyl)adenosine (i(6)A). The polypeptide is tRNA dimethylallyltransferase (Halorhodospira halophila (strain DSM 244 / SL1) (Ectothiorhodospira halophila (strain DSM 244 / SL1))).